A 227-amino-acid chain; its full sequence is MAYPFQLGLQDATSPIMEELLHFHDHTLMIVFLISSLVLYIITLMLTTKLTHTSTMDAQEVETVWTILPAIILVLIALPSLRILYMMDEINNPSLTVKTMGHQWYWSYEYTDYEDLNFDSYMIPTQELKPGELRLLEVDNRVVLPMEMTIRMLISSEDVLHSWAVPSLGLKTDAIPGRLNQTTLMAMRPGLYYGQCSEICGSNHSFMPIVLEMVPLSYFETWSALMV.

Over 1–14 (MAYPFQLGLQDATS) the chain is Mitochondrial intermembrane. A helical transmembrane segment spans residues 15–45 (PIMEELLHFHDHTLMIVFLISSLVLYIITLM). The Mitochondrial matrix segment spans residues 46 to 59 (LTTKLTHTSTMDAQ). A helical membrane pass occupies residues 60-87 (EVETVWTILPAIILVLIALPSLRILYMM). The Mitochondrial intermembrane portion of the chain corresponds to 88 to 227 (DEINNPSLTV…YFETWSALMV (140 aa)). 6 residues coordinate Cu cation: His161, Cys196, Glu198, Cys200, His204, and Met207. Glu198 provides a ligand contact to Mg(2+). Tyr218 carries the phosphotyrosine modification.

It belongs to the cytochrome c oxidase subunit 2 family. As to quaternary structure, component of the cytochrome c oxidase (complex IV, CIV), a multisubunit enzyme composed of 14 subunits. The complex is composed of a catalytic core of 3 subunits MT-CO1, MT-CO2 and MT-CO3, encoded in the mitochondrial DNA, and 11 supernumerary subunits COX4I, COX5A, COX5B, COX6A, COX6B, COX6C, COX7A, COX7B, COX7C, COX8 and NDUFA4, which are encoded in the nuclear genome. The complex exists as a monomer or a dimer and forms supercomplexes (SCs) in the inner mitochondrial membrane with NADH-ubiquinone oxidoreductase (complex I, CI) and ubiquinol-cytochrome c oxidoreductase (cytochrome b-c1 complex, complex III, CIII), resulting in different assemblies (supercomplex SCI(1)III(2)IV(1) and megacomplex MCI(2)III(2)IV(2)). Found in a complex with TMEM177, COA6, COX18, COX20, SCO1 and SCO2. Interacts with TMEM177 in a COX20-dependent manner. Interacts with COX20. Interacts with COX16. It depends on Cu cation as a cofactor.

It localises to the mitochondrion inner membrane. The enzyme catalyses 4 Fe(II)-[cytochrome c] + O2 + 8 H(+)(in) = 4 Fe(III)-[cytochrome c] + 2 H2O + 4 H(+)(out). Its function is as follows. Component of the cytochrome c oxidase, the last enzyme in the mitochondrial electron transport chain which drives oxidative phosphorylation. The respiratory chain contains 3 multisubunit complexes succinate dehydrogenase (complex II, CII), ubiquinol-cytochrome c oxidoreductase (cytochrome b-c1 complex, complex III, CIII) and cytochrome c oxidase (complex IV, CIV), that cooperate to transfer electrons derived from NADH and succinate to molecular oxygen, creating an electrochemical gradient over the inner membrane that drives transmembrane transport and the ATP synthase. Cytochrome c oxidase is the component of the respiratory chain that catalyzes the reduction of oxygen to water. Electrons originating from reduced cytochrome c in the intermembrane space (IMS) are transferred via the dinuclear copper A center (CU(A)) of subunit 2 and heme A of subunit 1 to the active site in subunit 1, a binuclear center (BNC) formed by heme A3 and copper B (CU(B)). The BNC reduces molecular oxygen to 2 water molecules using 4 electrons from cytochrome c in the IMS and 4 protons from the mitochondrial matrix. This Vulpes zerda (Fennec fox) protein is Cytochrome c oxidase subunit 2 (MT-CO2).